The sequence spans 175 residues: 2-oxo-4-hydroxy-4-carboxy-5-ureidoimidazoline decarboxylase (175 aa).

Residue His67 is the Proton donor of the active site. Residues Pro68, 84 to 88, and 119 to 123 contribute to the substrate site; these read SQNEQ and FVICA. The short motif at 173-175 is the Microbody targeting signal element; it reads TKL.

The protein belongs to the OHCU decarboxylase family.

It localises to the peroxisome. The enzyme catalyses 5-hydroxy-2-oxo-4-ureido-2,5-dihydro-1H-imidazole-5-carboxylate + H(+) = (S)-allantoin + CO2. It participates in purine metabolism; urate degradation; (S)-allantoin from urate: step 3/3. In terms of biological role, catalyzes the stereoselective decarboxylation of 2-oxo-4-hydroxy-4-carboxy-5-ureidoimidazoline (OHCU) to (S)-allantoin. The protein is 2-oxo-4-hydroxy-4-carboxy-5-ureidoimidazoline decarboxylase (urad) of Xenopus laevis (African clawed frog).